The sequence spans 638 residues: Gamma-aminobutyric acid receptor subunit theta (638 aa).

A signal peptide spans 1-21 (MGIRGMLRAAALLLLIRTWLA). At 22–267 (ESNGPSPTPK…FQVQREVRSY (246 aa)) the chain is on the extracellular side. N127 carries N-linked (GlcNAc...) asparagine glycosylation. C183 and C197 are oxidised to a cystine. Residues 268-288 (LVQVYWPTVLTTILSWISFWM) traverse the membrane as a helical segment. At 289-296 (NYDSSAAR) the chain is on the cytoplasmic side. Residues 297-314 (VTIGLTSILVLTTIDSHM) traverse the membrane as a helical segment. Residues 315 to 325 (RDKLPHISCIK) lie on the Extracellular side of the membrane. Residues 326-346 (AIDIYILVCLFFVFLSLLEYV) form a helical membrane-spanning segment. Topologically, residues 347-617 (YINYLFFSQV…NRVPKVDRWS (271 aa)) are cytoplasmic. Positions 491–515 (ACDDEDSEESLSSEESHGHGSSHTG) are disordered. The span at 492–502 (CDDEDSEESLS) shows a compositional bias: acidic residues. The chain crosses the membrane as a helical span at residues 618–638 (RFLFPLSFGLFNVVYWLYHVY).

This sequence belongs to the ligand-gated ion channel (TC 1.A.9) family. Gamma-aminobutyric acid receptor (TC 1.A.9.5) subfamily. GABRQ sub-subfamily. As to quaternary structure, heteropentamer, formed by a combination of alpha (GABRA1-6), beta (GABRB1-3), gamma (GABRG1-3), delta (GABRD), epsilon (GABRE), rho (GABRR1-3), pi (GABRP) and theta (GABRQ) chains, each subunit exhibiting distinct physiological and pharmacological properties. Expressed in brain, lung, and spleen.

The protein localises to the postsynaptic cell membrane. Its subcellular location is the cell membrane. It carries out the reaction chloride(in) = chloride(out). Potentiated by etomidate, propofol, pregnanolone and pentobarbital. In terms of biological role, theta subunit of the heteropentameric ligand-gated chloride channel gated by gamma-aminobutyric acid (GABA), a major inhibitory neurotransmitter in the brain. GABA-gated chloride channels, also named GABA(A) receptors (GABAAR), consist of five subunits arranged around a central pore and contain GABA active binding site(s) located at the alpha and beta subunit interfaces. When activated by GABA, GABAARs selectively allow the flow of chloride anions across the cell membrane down their electrochemical gradient. The chain is Gamma-aminobutyric acid receptor subunit theta from Mus musculus (Mouse).